A 94-amino-acid chain; its full sequence is Small ribosomal subunit protein bS16c (94 aa).

It belongs to the bacterial ribosomal protein bS16 family.

Its subcellular location is the plastid. It is found in the chloroplast. The chain is Small ribosomal subunit protein bS16c from Phalaenopsis aphrodite subsp. formosana (Moth orchid).